Consider the following 818-residue polypeptide: Patatin-like phospholipase domain-containing protein YALI0D16379g (818 aa).

Disordered stretches follow at residues M1–N50 and E154–E178. A compositionally biased stretch (polar residues) spans S22–R38. Over residues K164–E178 the composition is skewed to basic and acidic residues. A helical membrane pass occupies residues W223 to V243. Residues L398 to N589 enclose the PNPLA domain. A GXSXG motif is present at residues G429 to G433. S431 (nucleophile) is an active-site residue. D576 functions as the Proton acceptor in the catalytic mechanism. The disordered stretch occupies residues A781–S805.

This sequence belongs to the PLPL family.

The protein resides in the membrane. Probable lipid hydrolase. This Yarrowia lipolytica (strain CLIB 122 / E 150) (Yeast) protein is Patatin-like phospholipase domain-containing protein YALI0D16379g.